We begin with the raw amino-acid sequence, 264 residues long: Purine nucleoside phosphorylase slr1573 (264 aa).

Zn(2+) contacts are provided by H61, C104, and H121.

The protein belongs to the purine nucleoside phosphorylase YfiH/LACC1 family. In terms of assembly, homodimer. The cofactor is Cu(2+). Zn(2+) is required as a cofactor.

It carries out the reaction adenosine + phosphate = alpha-D-ribose 1-phosphate + adenine. It catalyses the reaction S-methyl-5'-thioadenosine + phosphate = 5-(methylsulfanyl)-alpha-D-ribose 1-phosphate + adenine. The enzyme catalyses inosine + phosphate = alpha-D-ribose 1-phosphate + hypoxanthine. The catalysed reaction is adenosine + H2O + H(+) = inosine + NH4(+). Purine nucleoside enzyme that catalyzes the phosphorolysis of adenosine and inosine nucleosides, yielding D-ribose 1-phosphate and the respective free bases, adenine and hypoxanthine. Also catalyzes the phosphorolysis of S-methyl-5'-thioadenosine into adenine and S-methyl-5-thio-alpha-D-ribose 1-phosphate. Also has adenosine deaminase activity. The chain is Purine nucleoside phosphorylase slr1573 from Synechocystis sp. (strain ATCC 27184 / PCC 6803 / Kazusa).